The primary structure comprises 482 residues: High affinity 3',5'-cyclic-AMP phosphodiesterase 7A (482 aa).

Phosphoserine is present on serine 84. Residues 136 to 458 form the PDEase domain; it reads LDDDYNGQAK…ASWKGLQREQ (323 aa). The Proton donor role is filled by histidine 212. Histidine 216, histidine 252, aspartate 253, and aspartate 362 together coordinate a divalent metal cation.

This sequence belongs to the cyclic nucleotide phosphodiesterase family. PDE7 subfamily. As to quaternary structure, interacts with CBFA2T3. A divalent metal cation is required as a cofactor. Found at high levels in skeletal muscle and at low levels in a variety of tissues including brain and heart. It is expressed as well in two T-cell lines. As to expression, found abundantly in skeletal muscle and at low levels in heart.

The protein resides in the cytoplasm. It localises to the cytosol. It carries out the reaction 3',5'-cyclic AMP + H2O = AMP + H(+). Its pathway is purine metabolism; 3',5'-cyclic AMP degradation; AMP from 3',5'-cyclic AMP: step 1/1. Insensitive to all selective PDE inhibitors. Its function is as follows. Hydrolyzes the second messenger cAMP, which is a key regulator of many important physiological processes. May have a role in muscle signal transduction. In Homo sapiens (Human), this protein is High affinity 3',5'-cyclic-AMP phosphodiesterase 7A.